The primary structure comprises 912 residues: E3 ubiquitin-protein ligase HACE1 (912 aa).

7 ANK repeats span residues L23–F55, V64–Y93, S97–I126, E130–V159, M163–R192, S196–D226, and N228–P253. The region spanning N577–A912 is the HECT domain. C879 functions as the Glycyl thioester intermediate in the catalytic mechanism.

The protein resides in the golgi apparatus. The protein localises to the golgi stack membrane. Its subcellular location is the cytoplasm. It is found in the endoplasmic reticulum. It catalyses the reaction S-ubiquitinyl-[E2 ubiquitin-conjugating enzyme]-L-cysteine + [acceptor protein]-L-lysine = [E2 ubiquitin-conjugating enzyme]-L-cysteine + N(6)-ubiquitinyl-[acceptor protein]-L-lysine.. Its pathway is protein modification; protein ubiquitination. Its function is as follows. E3 ubiquitin-protein ligase involved in Golgi membrane fusion and regulation of small GTPases. Acts as a regulator of Golgi membrane dynamics during the cell cycle: recruited to Golgi membrane by Rab proteins and regulates postmitotic Golgi membrane fusion. Acts by mediating ubiquitination during mitotic Golgi disassembly, ubiquitination serving as a signal for Golgi reassembly later, after cell division. This Xenopus tropicalis (Western clawed frog) protein is E3 ubiquitin-protein ligase HACE1 (hace1).